A 320-amino-acid chain; its full sequence is Probable carboxylesterase M8 (320 aa).

An Involved in the stabilization of the negatively charged intermediate by the formation of the oxyanion hole motif is present at residues 52–54 (HGG). Residues Ser-137 and His-296 contribute to the active site.

The protein belongs to the 'GDXG' lipolytic enzyme family.

It carries out the reaction a carboxylic ester + H2O = an alcohol + a carboxylate + H(+). It participates in secondary metabolite biosynthesis. Probable carboxylesterase; part of the gene cluster that mediates the biosynthesis of squalestatin S1 (SQS1, also known as zaragozic acid A), a heavily oxidized fungal polyketide that offers potent cholesterol lowering activity by targeting squalene synthase (SS). SQS1 is composed of a 2,8-dioxobicyclic[3.2.1]octane-3,4,5-tricarboxyclic acid core that is connected to two lipophilic polyketide arms. These initial steps feature the priming of an unusual benzoic acid starter unit onto the highly reducing polyketide synthase pks2, followed by oxaloacetate extension and product release to generate a tricarboxylic acid containing product. The phenylalanine ammonia lyase (PAL) M7 and the acyl-CoA ligase M9 are involved in transforming phenylalanine into benzoyl-CoA. The citrate synthase-like protein R3 is involved in connecting the C-alpha-carbons of the hexaketide chain and oxaloacetate to afford the tricarboxylic acid unit. The potential hydrolytic enzymes, M8 and M10, are in close proximity to pks2 and may participate in product release. On the other side, the tetraketide arm is synthesized by a the squalestatin tetraketide synthase pks1 and enzymatically esterified to the core in the last biosynthetic step, by the acetyltransferase M4. The biosynthesis of the tetraketide must involve 3 rounds of chain extension. After the first and second rounds methyl-transfer occurs, and in all rounds of extension the ketoreductase and dehydratase are active. The enoyl reductase and C-MeT of pks1 are not active in the final round of extension. The acetyltransferase M4 appears to have a broad substrate selectivity for its acyl CoA substrate, allowing the in vitro synthesis of novel squalestatins. The biosynthesis of SQS1 requires several oxidative steps likely performed by oxidoreductases M1, R1 and R2. Finally, in support of the identification of the cluster as being responsible for SQS1 production, the cluster contains a gene encoding a putative squalene synthase (SS) R6, suggesting a likely mechanism for self-resistance. This chain is Probable carboxylesterase M8, found in Phoma sp. (strain ATCC 20986 / MF5453).